Reading from the N-terminus, the 238-residue chain is Fatty acid metabolism regulator protein (238 aa).

In terms of domain architecture, HTH gntR-type spans 6 to 74 (KGPASFAEKY…HGKPTRVNNF (69 aa)). The H-T-H motif DNA-binding region spans 34-53 (ERELSELIGVTRTTLREVLQ).

As to quaternary structure, homodimer.

Its subcellular location is the cytoplasm. Its function is as follows. Multifunctional regulator of fatty acid metabolism. The chain is Fatty acid metabolism regulator protein from Shewanella baltica (strain OS185).